The primary structure comprises 220 residues: Probable septum site-determining protein MinC (220 aa).

This sequence belongs to the MinC family. As to quaternary structure, interacts with MinD and FtsZ.

Cell division inhibitor that blocks the formation of polar Z ring septums. Rapidly oscillates between the poles of the cell to destabilize FtsZ filaments that have formed before they mature into polar Z rings. Prevents FtsZ polymerization. The sequence is that of Probable septum site-determining protein MinC from Vibrio atlanticus (strain LGP32) (Vibrio splendidus (strain Mel32)).